The primary structure comprises 322 residues: Lignin-forming anionic peroxidase (322 aa).

An N-terminal signal peptide occupies residues 1–27 (MNTPTQSFRAKAAIFSLLLLSCMQCHA). Residue Q28 is modified to Pyrrolidone carboxylic acid. Disulfide bonds link C38–C118, C71–C76, C124–C318, and C203–C229. Catalysis depends on H69, which acts as the Proton acceptor. 5 residues coordinate Ca(2+): D70, V73, G75, D77, and S79. Substrate is bound at residue P166. H196 lines the heme b pocket. T197 lines the Ca(2+) pocket. N213 is a glycosylation site (N-linked (GlcNAc...) asparagine). Residues D242, T245, and D250 each contribute to the Ca(2+) site.

The protein belongs to the peroxidase family. Classical plant (class III) peroxidase subfamily. It depends on Ca(2+) as a cofactor. Requires heme b as cofactor. In terms of tissue distribution, mesophyll protoplasts and to a much lesser extent, roots and germinating seeds.

Its subcellular location is the secreted. It catalyses the reaction 2 a phenolic donor + H2O2 = 2 a phenolic radical donor + 2 H2O. In terms of biological role, removal of H(2)O(2), oxidation of toxic reductants, biosynthesis and degradation of lignin, suberization, auxin catabolism, response to environmental stresses such as wounding, pathogen attack and oxidative stress. These functions might be dependent on each isozyme/isoform in each plant tissue. Plays an integral role in secondary cell wall biosynthesis by the polymerization of cinnamyl alcohols into lignin and by forming rigid cross-links between cellulose, pectin, hydroxy-proline-rich glycoproteins, and lignin. The protein is Lignin-forming anionic peroxidase of Nicotiana sylvestris (Wood tobacco).